A 154-amino-acid chain; its full sequence is Superoxide dismutase [Cu-Zn] (154 aa).

Cu cation contacts are provided by His47, His49, and His64. Residues Cys58 and Cys147 are joined by a disulfide bond. Positions 64, 72, 81, and 84 each coordinate Zn(2+). A Cu cation-binding site is contributed by His121. Arg144 contacts substrate.

This sequence belongs to the Cu-Zn superoxide dismutase family. In terms of assembly, homodimer. Requires Cu cation as cofactor. The cofactor is Zn(2+).

It is found in the cytoplasm. It carries out the reaction 2 superoxide + 2 H(+) = H2O2 + O2. Its function is as follows. Destroys radicals which are normally produced within the cells and which are toxic to biological systems. This is Superoxide dismutase [Cu-Zn] (SOD1) from Candida albicans (Yeast).